The chain runs to 634 residues: Probable threonine--tRNA ligase, cytoplasmic (634 aa).

Residues 1–61 (MSIYVTFKGQ…NENQKIELYD (61 aa)) enclose the TGS domain.

It belongs to the class-II aminoacyl-tRNA synthetase family.

Its subcellular location is the cytoplasm. The catalysed reaction is tRNA(Thr) + L-threonine + ATP = L-threonyl-tRNA(Thr) + AMP + diphosphate + H(+). The polypeptide is Probable threonine--tRNA ligase, cytoplasmic (Enterocytozoon bieneusi (strain H348) (Microsporidian parasite)).